The sequence spans 299 residues: Taste receptor type 2 member 4 (299 aa).

Over 1–9 (MLWLFYSSA) the chain is Extracellular. A helical membrane pass occupies residues 10 to 30 (IIASVILDFVGIIMSLFITVV). At 31 to 46 (NYKTWVKSHRISSSER) the chain is on the cytoplasmic side. The chain crosses the membrane as a helical span at residues 47–67 (ILFSLGITRFFMLALFLVNTI). The Extracellular portion of the chain corresponds to 68–81 (YFVSSNKERSVYLS). A helical transmembrane segment spans residues 82 to 102 (AFFVLCFMFLDSSSLWFVTLL). The Cytoplasmic segment spans residues 103–131 (NSLYCVKITNFQHSVFLLLKRNISPKIPR). A helical transmembrane segment spans residues 132–152 (LLPACVLISAFTTCLYITLSQ). Residues 153 to 172 (ASPFPELVTKRNNTSFNISE) are Extracellular-facing. Residues Asn164, Asn165, and Asn169 are each glycosylated (N-linked (GlcNAc...) asparagine). Residues 173-193 (GILSLVVSFVLSSSLQFIINV) traverse the membrane as a helical segment. The Cytoplasmic portion of the chain corresponds to 194-230 (TSASLLIYSLRRHIRKMQKNATGFWNPQTEAHVGAMK). The helical transmembrane segment at 231–251 (LMIYFLILYIPYSVATLVQYL) threads the bilayer. Over 252 to 262 (PFYAGMDMGTK) the chain is Extracellular. A helical membrane pass occupies residues 263–283 (SICLIFATLYSPGHSVLIIIT). The Cytoplasmic segment spans residues 284-299 (HPKLKTTAKKILCFKK).

This sequence belongs to the G-protein coupled receptor T2R family.

Its subcellular location is the membrane. The protein localises to the cell projection. It localises to the cilium membrane. Gustducin-coupled receptor implicated in the perception of bitter compounds in the oral cavity and the gastrointestinal tract. Signals through PLCB2 and the calcium-regulated cation channel TRPM5. In airway epithelial cells, binding of denatonium increases the intracellular calcium ion concentration and stimulates ciliary beat frequency. The polypeptide is Taste receptor type 2 member 4 (TAS2R4) (Papio hamadryas (Hamadryas baboon)).